The chain runs to 451 residues: Homeobox protein meis3-B (451 aa).

The segment at 33 to 64 (HHSLSQSTPYGSTGAAHRVPMPPGMGSNDGLK) is disordered. The segment covering 34-43 (HSLSQSTPYG) has biased composition (polar residues). Residues 102 to 185 (GGDVCSSDSF…PIDLVIDDRD (84 aa)) enclose the MEIS N-terminal domain. Residues 206 to 272 (NNTWIRDHDE…RDKKRNKKRG (67 aa)) are disordered. Residues 218–230 (STHSGTPGPSSGG) show a composition bias toward low complexity. Positions 231 to 242 (LASQSGDNSSEQ) are enriched in polar residues. The segment at residues 267 to 329 (RNKKRGIFPK…NARRRIVQPM (63 aa)) is a DNA-binding region (homeobox).

Belongs to the TALE/MEIS homeobox family.

The protein resides in the nucleus. Its function is as follows. A caudalizing protein which is required to pattern the anterior/posterior (A/P) axis during central nervous system (CNS) formation. Inhibits anterior neural expression and acts as a transcriptional activator to induce posterior neural gene expression. Maintains a proper A/P balance required for hindbrain formation by activating the FGF/MAPK pathway, which modulates the planar cell polarity (PCP) pathway. Interacts with retinoid signaling during hindbrain patterning. This is Homeobox protein meis3-B (meis3-b) from Xenopus laevis (African clawed frog).